A 282-amino-acid chain; its full sequence is Virginiamycin B lyase (282 aa).

A substrate-binding site is contributed by His217. Residue Glu256 coordinates Mg(2+). The active-site Proton acceptor is His258. Glu273 contributes to the Mg(2+) binding site.

Belongs to the Vgb family. Monomer. It depends on Mg(2+) as a cofactor.

Its function is as follows. Inactivates the type B streptogramin antibiotics by linearizing the lactone ring at the ester linkage, generating a free phenylglycine carboxylate and converting the threonyl moiety into 2-amino-butenoic acid. The chain is Virginiamycin B lyase from Mycolicibacterium smegmatis (strain ATCC 700084 / mc(2)155) (Mycobacterium smegmatis).